We begin with the raw amino-acid sequence, 283 residues long: ATP phosphoribosyltransferase (283 aa).

This sequence belongs to the ATP phosphoribosyltransferase family. Long subfamily. The cofactor is Mg(2+).

The protein localises to the cytoplasm. It catalyses the reaction 1-(5-phospho-beta-D-ribosyl)-ATP + diphosphate = 5-phospho-alpha-D-ribose 1-diphosphate + ATP. It participates in amino-acid biosynthesis; L-histidine biosynthesis; L-histidine from 5-phospho-alpha-D-ribose 1-diphosphate: step 1/9. Feedback inhibited by histidine. Functionally, catalyzes the condensation of ATP and 5-phosphoribose 1-diphosphate to form N'-(5'-phosphoribosyl)-ATP (PR-ATP). Has a crucial role in the pathway because the rate of histidine biosynthesis seems to be controlled primarily by regulation of HisG enzymatic activity. In Salinibacter ruber (strain DSM 13855 / M31), this protein is ATP phosphoribosyltransferase.